Consider the following 302-residue polypeptide: Sulfate adenylyltransferase subunit 2 (302 aa).

This sequence belongs to the PAPS reductase family. CysD subfamily. Heterodimer composed of CysD, the smaller subunit, and CysN.

The catalysed reaction is sulfate + ATP + H(+) = adenosine 5'-phosphosulfate + diphosphate. It participates in sulfur metabolism; hydrogen sulfide biosynthesis; sulfite from sulfate: step 1/3. Functionally, with CysN forms the ATP sulfurylase (ATPS) that catalyzes the adenylation of sulfate producing adenosine 5'-phosphosulfate (APS) and diphosphate, the first enzymatic step in sulfur assimilation pathway. APS synthesis involves the formation of a high-energy phosphoric-sulfuric acid anhydride bond driven by GTP hydrolysis by CysN coupled to ATP hydrolysis by CysD. In Shewanella halifaxensis (strain HAW-EB4), this protein is Sulfate adenylyltransferase subunit 2.